The primary structure comprises 90 residues: Acylphosphatase (90 aa).

Positions 4–90 constitute an Acylphosphatase-like domain; it reads TRRVRFYGRV…TEFQDFQIKR (87 aa). Catalysis depends on residues Arg19 and Asn37.

This sequence belongs to the acylphosphatase family.

It carries out the reaction an acyl phosphate + H2O = a carboxylate + phosphate + H(+). The sequence is that of Acylphosphatase (acyP) from Thermoplasma volcanium (strain ATCC 51530 / DSM 4299 / JCM 9571 / NBRC 15438 / GSS1).